The following is a 519-amino-acid chain: Protein nucleotidyltransferase YdiU (519 aa).

ATP-binding residues include Gly100, Gly102, Arg103, Lys123, Asp135, Gly136, Arg193, and Arg200. Residue Asp270 is the Proton acceptor of the active site. Residues Asn271 and Asp280 each contribute to the Mg(2+) site. Asp280 provides a ligand contact to ATP.

This sequence belongs to the SELO family. Requires Mg(2+) as cofactor. It depends on Mn(2+) as a cofactor.

The enzyme catalyses L-seryl-[protein] + ATP = 3-O-(5'-adenylyl)-L-seryl-[protein] + diphosphate. The catalysed reaction is L-threonyl-[protein] + ATP = 3-O-(5'-adenylyl)-L-threonyl-[protein] + diphosphate. It catalyses the reaction L-tyrosyl-[protein] + ATP = O-(5'-adenylyl)-L-tyrosyl-[protein] + diphosphate. It carries out the reaction L-histidyl-[protein] + UTP = N(tele)-(5'-uridylyl)-L-histidyl-[protein] + diphosphate. The enzyme catalyses L-seryl-[protein] + UTP = O-(5'-uridylyl)-L-seryl-[protein] + diphosphate. The catalysed reaction is L-tyrosyl-[protein] + UTP = O-(5'-uridylyl)-L-tyrosyl-[protein] + diphosphate. Nucleotidyltransferase involved in the post-translational modification of proteins. It can catalyze the addition of adenosine monophosphate (AMP) or uridine monophosphate (UMP) to a protein, resulting in modifications known as AMPylation and UMPylation. The sequence is that of Protein nucleotidyltransferase YdiU from Xylella fastidiosa (strain Temecula1 / ATCC 700964).